Consider the following 453-residue polypeptide: Bifunctional protein GlmU (453 aa).

The interval 1–231 is pyrophosphorylase; that stretch reads MERTCLAVIL…EIEMTGCNNR (231 aa). Residues 10-13, K24, Q77, 82-83, 105-107, G143, E157, N172, and N229 contribute to the UDP-N-acetyl-alpha-D-glucosamine site; these read LAAG, GT, and YGD. D107 contacts Mg(2+). N229 contributes to the Mg(2+) binding site. Residues 232-252 are linker; that stretch reads AELAVIERFWQERRRREMMLA. Residues 253 to 453 are N-acetyltransferase; that stretch reads GVTMIAPETV…AIKAAKRAKA (201 aa). UDP-N-acetyl-alpha-D-glucosamine is bound by residues R318 and K336. H348 serves as the catalytic Proton acceptor. Y351 and N362 together coordinate UDP-N-acetyl-alpha-D-glucosamine. Acetyl-CoA is bound by residues A365, 371 to 372, S390, S408, and R425; that span reads NY.

The protein in the N-terminal section; belongs to the N-acetylglucosamine-1-phosphate uridyltransferase family. This sequence in the C-terminal section; belongs to the transferase hexapeptide repeat family. Homotrimer. Requires Mg(2+) as cofactor.

The protein localises to the cytoplasm. It catalyses the reaction alpha-D-glucosamine 1-phosphate + acetyl-CoA = N-acetyl-alpha-D-glucosamine 1-phosphate + CoA + H(+). It carries out the reaction N-acetyl-alpha-D-glucosamine 1-phosphate + UTP + H(+) = UDP-N-acetyl-alpha-D-glucosamine + diphosphate. It participates in nucleotide-sugar biosynthesis; UDP-N-acetyl-alpha-D-glucosamine biosynthesis; N-acetyl-alpha-D-glucosamine 1-phosphate from alpha-D-glucosamine 6-phosphate (route II): step 2/2. The protein operates within nucleotide-sugar biosynthesis; UDP-N-acetyl-alpha-D-glucosamine biosynthesis; UDP-N-acetyl-alpha-D-glucosamine from N-acetyl-alpha-D-glucosamine 1-phosphate: step 1/1. It functions in the pathway bacterial outer membrane biogenesis; LPS lipid A biosynthesis. Functionally, catalyzes the last two sequential reactions in the de novo biosynthetic pathway for UDP-N-acetylglucosamine (UDP-GlcNAc). The C-terminal domain catalyzes the transfer of acetyl group from acetyl coenzyme A to glucosamine-1-phosphate (GlcN-1-P) to produce N-acetylglucosamine-1-phosphate (GlcNAc-1-P), which is converted into UDP-GlcNAc by the transfer of uridine 5-monophosphate (from uridine 5-triphosphate), a reaction catalyzed by the N-terminal domain. This chain is Bifunctional protein GlmU, found in Rhizobium etli (strain CIAT 652).